The following is a 512-amino-acid chain: Pantetheinase (512 aa).

A signal peptide spans 1 to 23 (MGMSWWLACAAAFSALCVLKASS). Positions 32–308 (YEHAVILPKD…GKLLFAQLKS (277 aa)) constitute a CN hydrolase domain. Glu-81 serves as the catalytic Proton acceptor. 2 N-linked (GlcNAc...) asparagine glycosylation sites follow: Asn-132 and Asn-148. Lys-180 functions as the Proton donor in the catalytic mechanism. The Nucleophile role is filled by Cys-213. Asn-316 and Asn-354 each carry an N-linked (GlcNAc...) asparagine glycan. Asn-488 carries the GPI-anchor amidated asparagine lipid modification. The propeptide at 489–512 (ASSDFIAHSLIIMLIVTPIIHYLC) is removed in mature form.

Belongs to the carbon-nitrogen hydrolase superfamily. BTD/VNN family. In terms of assembly, monomer. Post-translationally, N-glycosylated. As to expression, detected in kidney (at protein level). Ubiquitous.

The protein resides in the cell membrane. It catalyses the reaction (R)-pantetheine + H2O = cysteamine + (R)-pantothenate. Functionally, amidohydrolase that hydrolyzes specifically one of the carboamide linkages in D-pantetheine thus recycling pantothenic acid (vitamin B5) and releasing cysteamine. The polypeptide is Pantetheinase (Vnn1) (Mus musculus (Mouse)).